A 1190-amino-acid polypeptide reads, in one-letter code: Pumilio homolog 1 (1190 aa).

4 disordered regions span residues 38–74, 491–531, 611–675, and 744–777; these read LTSGPVGQQQPPQPPTHSALATGPHASPVGGSMGVAG, SNSA…QQTD, ANGP…NSSL, and GPVGMPLPSQGPSHSQTPPPSLSSHGSSTSLNLG. Low complexity-rich tracts occupy residues 491 to 508, 518 to 531, 628 to 675, and 765 to 777; these read SNSASQQNNPQSQQGQQQ, PLTPNQNQQGQQTD, QQPQ…NSSL, and LSSHGSSTSLNLG. The 343-residue stretch at 830–1172 folds into the PUM-HD domain; it reads GRSRLLEDFR…HILAKLEKYY (343 aa). Pumilio repeat units follow at residues 850 to 885, 886 to 921, 922 to 959, 960 to 995, 996 to 1031, 1032 to 1067, 1068 to 1103, and 1107 to 1146; these read EIAGHIMEFSQDQHGSRFIQLKLERATPAERQLVFN, EILQAAYQLMVDVFGNYVIQKFFEFGSLEQKLALAE, RIRGHVLSLALQMYGCRVIQKALEFIPPDQQVINEMVR, ELDGHVLKCVKDQNGNHVVQKCIECVQPQSLQFIID, AFKSQVFALSTHPYGCRVIQRILEHCLPEQTLPILE, ELHQHTEQLVQDQYGNYVIQHVLEHGRPEDKSKIVA, EIRGNVLVLSQHKFASNVVEKCVTHASRTERAMLID, and TMNDGPHSALYTMMKDQYANYVVQKMIDVAEPAQRKIVMH. An adenine-nucleotide binding in RNA target region spans residues 865–869; it reads SRFIQ. A uracil-nucleotide binding in RNA target region spans residues 901 to 905; sequence NYVIQ. The adenine-nucleotide binding in RNA target stretch occupies residues 937–941; that stretch reads CRVIQ. The tract at residues 975–979 is non-specific-nucleotide binding in RNA target; the sequence is NHVVQ. Residues 1011-1015 are adenine-nucleotide binding in RNA target; the sequence is CRVIQ. Residues 1047-1051 form a uracil-nucleotide binding in RNA target region; sequence NYVIQ. Positions 1083–1087 are guanine-nucleotide binding in RNA target; that stretch reads SNVVE. The segment at 1126–1130 is uracil-nucleotide binding in RNA target; sequence NYVVQ.

In terms of assembly, interacts with cpeb1-a; interacts with unphosphorylated cpeb1-a but not phosphorylated. Component of a complex with papd4, sympk, tacc3, parn, dazl and cpeb1. In terms of processing, phosphorylated. Phosphorylation takes place at the time of dissociation of cpeb1-a from pum1 and the translational activation of ccnb1 mRNA. As to expression, present in oocytes (at protein level).

The protein resides in the cytoplasm. Its subcellular location is the P-body. It is found in the cytoplasmic granule. In terms of biological role, sequence-specific RNA-binding protein that acts as a post-transcriptional repressor by binding the 3'-UTR of mRNA targets. Binds to an RNA consensus sequence, the Pumilio Response Element (PRE), 5'-UGUANAUA-3', that is related to the Nanos Response Element (NRE). Mediates post-transcriptional repression of transcripts via different mechanisms: acts via direct recruitment of deadenylase complexes leading to translational inhibition and mRNA degradation. Also mediates deadenylation-independent repression by promoting accessibility of miRNAs. Acts as a post-transcriptional repressor of ccnb1 mRNA during oocyte maturation. The polypeptide is Pumilio homolog 1 (Xenopus laevis (African clawed frog)).